The chain runs to 337 residues: 2-ketoarginine methyltransferase (337 aa).

It belongs to the 2-ketoarginine methyltransferase family.

The catalysed reaction is 5-guanidino-2-oxopentanoate + S-adenosyl-L-methionine = (3R)-5-guanidino-3-methyl-2-oxopentanoate + S-adenosyl-L-homocysteine + H(+). The protein operates within antibiotic biosynthesis. S-adenosyl-L-methionine-dependent methyltransferase involved in the formation of the rare amino acid 3-methylarginine (MeArg), which is incorporated into the peptidyl nucleoside antibiotic arginomycin. Transfers the methyl group from S-adenosyl-L-methionine into 5-guanidino-2-oxopentanoate acid to yield 5-guanidino-3-methyl-2-oxopentanoate, a precursor of MeArg. The sequence is that of 2-ketoarginine methyltransferase from Streptomyces arginensis.